A 309-amino-acid chain; its full sequence is Protein FdhE homolog (309 aa).

The protein belongs to the FdhE family.

The protein localises to the cytoplasm. Necessary for formate dehydrogenase activity. This chain is Protein FdhE homolog, found in Pectobacterium atrosepticum (strain SCRI 1043 / ATCC BAA-672) (Erwinia carotovora subsp. atroseptica).